Consider the following 384-residue polypeptide: Viral protein 1 (384 aa).

The polypeptide is Viral protein 1 (Chaetoceros setoense (Chaetoceros setoense DNA virus)).